The following is a 372-amino-acid chain: Protein REVEILLE 7 (372 aa).

One can recognise an HTH myb-type domain in the interval 71–125 (TVTKQREKWSEEEHDRFLEAIKLYGRGWRQIQEHIGTKTAVQIRSHAQKFFSKMA). The H-T-H motif DNA-binding region spans 98–121 (WRQIQEHIGTKTAVQIRSHAQKFF). The interval 124 to 204 (MAQEADSRSE…RCSSPNSCTS (81 aa)) is disordered. Residues 145–155 (RPKRKPAHPYP) show a composition bias toward basic residues. The span at 156-169 (RKSPVPYTQSPPPN) shows a compositional bias: pro residues. Over residues 178 to 204 (KSPTSVLSSFGSEDQVNRCSSPNSCTS) the composition is skewed to polar residues.

The protein resides in the nucleus. In terms of biological role, transcription factor involved in phytochrome A-mediated cotyledon opening. Controlled by the central oscillator mediated by LHY and CCA1. Part of a regulatory circadian feedback loop. Regulates its own expression. The polypeptide is Protein REVEILLE 7 (RVE7) (Arabidopsis thaliana (Mouse-ear cress)).